A 580-amino-acid polypeptide reads, in one-letter code: 2-succinyl-5-enolpyruvyl-6-hydroxy-3-cyclohexene-1-carboxylate synthase (580 aa).

Belongs to the TPP enzyme family. MenD subfamily. As to quaternary structure, homodimer. Mg(2+) serves as cofactor. It depends on Mn(2+) as a cofactor. The cofactor is thiamine diphosphate.

It catalyses the reaction isochorismate + 2-oxoglutarate + H(+) = 5-enolpyruvoyl-6-hydroxy-2-succinyl-cyclohex-3-ene-1-carboxylate + CO2. It participates in quinol/quinone metabolism; 1,4-dihydroxy-2-naphthoate biosynthesis; 1,4-dihydroxy-2-naphthoate from chorismate: step 2/7. The protein operates within quinol/quinone metabolism; menaquinone biosynthesis. Functionally, catalyzes the thiamine diphosphate-dependent decarboxylation of 2-oxoglutarate and the subsequent addition of the resulting succinic semialdehyde-thiamine pyrophosphate anion to isochorismate to yield 2-succinyl-5-enolpyruvyl-6-hydroxy-3-cyclohexene-1-carboxylate (SEPHCHC). The polypeptide is 2-succinyl-5-enolpyruvyl-6-hydroxy-3-cyclohexene-1-carboxylate synthase (Listeria monocytogenes serotype 4b (strain F2365)).